The primary structure comprises 163 residues: Phosphopantetheine adenylyltransferase (163 aa).

Ser-11 is a binding site for substrate. ATP-binding positions include 11 to 12 (SF) and His-19. Lys-43, Ala-76, and Arg-90 together coordinate substrate. ATP-binding positions include 91–93 (GLR), Glu-101, and 126–132 (WQALSSS).

Belongs to the bacterial CoaD family. In terms of assembly, homohexamer. Mg(2+) is required as a cofactor.

The protein localises to the cytoplasm. The enzyme catalyses (R)-4'-phosphopantetheine + ATP + H(+) = 3'-dephospho-CoA + diphosphate. It functions in the pathway cofactor biosynthesis; coenzyme A biosynthesis; CoA from (R)-pantothenate: step 4/5. In terms of biological role, reversibly transfers an adenylyl group from ATP to 4'-phosphopantetheine, yielding dephospho-CoA (dPCoA) and pyrophosphate. The protein is Phosphopantetheine adenylyltransferase of Streptococcus pyogenes serotype M2 (strain MGAS10270).